A 177-amino-acid polypeptide reads, in one-letter code: MSRIAKYPVELPKGVEASIQQDQITVKGPLGTLVQALTGDVNIVEDAGKLTFAAANDSRHANAMSGTVRALVANMVTGVSKGFERKLTLVGVGYRASVQGEAVKLQLGFSHDILHKLPAGIKAECPTQTEIVIKGANKQVVGQVAAEIRAYREPEPYKGKGVRYADERVVIKETKKK.

It belongs to the universal ribosomal protein uL6 family. As to quaternary structure, part of the 50S ribosomal subunit.

This protein binds to the 23S rRNA, and is important in its secondary structure. It is located near the subunit interface in the base of the L7/L12 stalk, and near the tRNA binding site of the peptidyltransferase center. This is Large ribosomal subunit protein uL6 from Bordetella avium (strain 197N).